Reading from the N-terminus, the 375-residue chain is Thioredoxin reductase 1, mitochondrial (375 aa).

A mitochondrion-targeting transit peptide spans 1–37; it reads MNCVSRLKCLISKARSFARLGGESTLSQPPSLASAAF. FAD is bound by residues 58 to 61, 79 to 80, 87 to 92, asparagine 101, valine 134, cysteine 192, aspartate 337, and 344 to 346; these read SGPA, FE, IAPGGQ, and RQA. Cysteine 189 and cysteine 192 form a disulfide bridge.

The protein belongs to the class-II pyridine nucleotide-disulfide oxidoreductase family. As to quaternary structure, homodimer. FAD serves as cofactor. In terms of tissue distribution, ubiquitous.

It is found in the cytoplasm. It localises to the mitochondrion. The catalysed reaction is [thioredoxin]-dithiol + NADP(+) = [thioredoxin]-disulfide + NADPH + H(+). NADPH-dependent thioredoxin-disulfide reductase that reduces thioredoxins O1, O2 and F3. The protein is Thioredoxin reductase 1, mitochondrial (NTR1) of Arabidopsis thaliana (Mouse-ear cress).